A 158-amino-acid chain; its full sequence is Snaclec alboaggregin-D subunit alpha (158 aa).

The signal sequence occupies residues 1-23 (MGRFIFGSFGLLVVFLSLSGTGA). Intrachain disulfides connect C27–C38, C55–C152, and C127–C144. A C-type lectin domain is found at 34–153 (YDRYCYQAFS…CAELNPFICK (120 aa)).

The protein belongs to the snaclec family. As to quaternary structure, tetramer of heterodimers of alpha and beta subunits (alphabeta)(4); disulfide-linked. As to expression, expressed by the venom gland.

The protein resides in the secreted. Functionally, snaclec that induces human platelet aggregation in the absence of any cofactor with the EC(50) of 0.25 nM and causes tyrosine phosphorylation in human platelets. Antibodies against either platelet GPIbalpha (GP1BA) or GPVI (GP6) inhibit alboaggregin D-induced platelet aggregation. Only the combination of these two antibodies completely inhibit aggregation, suggesting that it acts through both GPIbalpha (GP1BA) and GPVI (GP6). This Trimeresurus albolabris (White-lipped pit viper) protein is Snaclec alboaggregin-D subunit alpha.